A 400-amino-acid polypeptide reads, in one-letter code: CCA-adding enzyme (400 aa).

Residues Gly32 and Arg35 each coordinate ATP. CTP-binding residues include Gly32 and Arg35. Mg(2+) contacts are provided by Asp45 and Asp47. Positions 116, 159, 162, 165, and 168 each coordinate ATP. Positions 116, 159, 162, 165, and 168 each coordinate CTP.

Belongs to the tRNA nucleotidyltransferase/poly(A) polymerase family. Bacterial CCA-adding enzyme type 3 subfamily. Homodimer. Mg(2+) is required as a cofactor.

It carries out the reaction a tRNA precursor + 2 CTP + ATP = a tRNA with a 3' CCA end + 3 diphosphate. The enzyme catalyses a tRNA with a 3' CCA end + 2 CTP + ATP = a tRNA with a 3' CCACCA end + 3 diphosphate. Catalyzes the addition and repair of the essential 3'-terminal CCA sequence in tRNAs without using a nucleic acid template. Adds these three nucleotides in the order of C, C, and A to the tRNA nucleotide-73, using CTP and ATP as substrates and producing inorganic pyrophosphate. tRNA 3'-terminal CCA addition is required both for tRNA processing and repair. Also involved in tRNA surveillance by mediating tandem CCA addition to generate a CCACCA at the 3' terminus of unstable tRNAs. While stable tRNAs receive only 3'-terminal CCA, unstable tRNAs are marked with CCACCA and rapidly degraded. In Limosilactobacillus fermentum (strain NBRC 3956 / LMG 18251) (Lactobacillus fermentum), this protein is CCA-adding enzyme.